The chain runs to 311 residues: Aspartate carbamoyltransferase catalytic subunit (311 aa).

Residues R55 and T56 each coordinate carbamoyl phosphate. K83 lines the L-aspartate pocket. Carbamoyl phosphate contacts are provided by R105, H133, and Q136. The L-aspartate site is built by R166 and R220. Residues G261 and P262 each coordinate carbamoyl phosphate.

This sequence belongs to the aspartate/ornithine carbamoyltransferase superfamily. ATCase family. Heterododecamer (2C3:3R2) of six catalytic PyrB chains organized as two trimers (C3), and six regulatory PyrI chains organized as three dimers (R2).

It catalyses the reaction carbamoyl phosphate + L-aspartate = N-carbamoyl-L-aspartate + phosphate + H(+). It functions in the pathway pyrimidine metabolism; UMP biosynthesis via de novo pathway; (S)-dihydroorotate from bicarbonate: step 2/3. In terms of biological role, catalyzes the condensation of carbamoyl phosphate and aspartate to form carbamoyl aspartate and inorganic phosphate, the committed step in the de novo pyrimidine nucleotide biosynthesis pathway. The polypeptide is Aspartate carbamoyltransferase catalytic subunit (Chlorobium chlorochromatii (strain CaD3)).